The following is a 422-amino-acid chain: L-2-hydroxyglutarate dehydrogenase (422 aa).

The protein belongs to the L2HGDH family. FAD is required as a cofactor.

Its subcellular location is the cell inner membrane. It catalyses the reaction (S)-2-hydroxyglutarate + a quinone = a quinol + 2-oxoglutarate. It functions in the pathway amino-acid degradation. In terms of biological role, catalyzes the dehydrogenation of L-2-hydroxyglutarate (L2HG) to alpha-ketoglutarate and couples to the respiratory chain by feeding electrons from the reaction into the membrane quinone pool. Functions in a L-lysine degradation pathway that proceeds via cadaverine, glutarate and L-2-hydroxyglutarate. Also displays some oxidase activity in vitro on L-2-hydroxyglutarate with O2 as the electron acceptor, but this activity is most likely not physiological. The protein is L-2-hydroxyglutarate dehydrogenase of Escherichia coli O17:K52:H18 (strain UMN026 / ExPEC).